We begin with the raw amino-acid sequence, 311 residues long: Glycine-betaine-binding protein (311 aa).

Positions 1 to 23 (MNRLIRSLCLACAGLFAAGLAQA) are cleaved as a signal peptide.

It belongs to the OsmX family.

It localises to the periplasm. Binds glycine-betaine. In Pseudomonas aeruginosa (strain ATCC 15692 / DSM 22644 / CIP 104116 / JCM 14847 / LMG 12228 / 1C / PRS 101 / PAO1), this protein is Glycine-betaine-binding protein.